The sequence spans 93 residues: Small ribosomal subunit protein uS19 (93 aa).

It belongs to the universal ribosomal protein uS19 family.

Protein S19 forms a complex with S13 that binds strongly to the 16S ribosomal RNA. In Mycobacterium tuberculosis (strain ATCC 25177 / H37Ra), this protein is Small ribosomal subunit protein uS19.